Here is a 122-residue protein sequence, read N- to C-terminus: Large ribosomal subunit protein uL14 (122 aa).

The protein belongs to the universal ribosomal protein uL14 family. As to quaternary structure, part of the 50S ribosomal subunit. Forms a cluster with proteins L3 and L19. In the 70S ribosome, L14 and L19 interact and together make contacts with the 16S rRNA in bridges B5 and B8.

Its function is as follows. Binds to 23S rRNA. Forms part of two intersubunit bridges in the 70S ribosome. The chain is Large ribosomal subunit protein uL14 from Oleidesulfovibrio alaskensis (strain ATCC BAA-1058 / DSM 17464 / G20) (Desulfovibrio alaskensis).